The primary structure comprises 299 residues: Probable lipid kinase YegS-like (299 aa).

The DAGKc domain occupies 2-133 (SRSAGSFLIL…IDIAHVNDKT (132 aa)). Residues threonine 40, 66-72 (GDGTINE), and threonine 95 contribute to the ATP site. Mg(2+) contacts are provided by leucine 215, aspartate 218, and leucine 220. Glutamate 271 serves as the catalytic Proton acceptor.

Belongs to the diacylglycerol/lipid kinase family. YegS lipid kinase subfamily. Mg(2+) is required as a cofactor. The cofactor is Ca(2+).

It localises to the cytoplasm. Probably phosphorylates lipids; the in vivo substrate is unknown. This Cronobacter sakazakii (strain ATCC BAA-894) (Enterobacter sakazakii) protein is Probable lipid kinase YegS-like.